A 337-amino-acid chain; its full sequence is Phenylalanine--tRNA ligase alpha subunit (337 aa).

Glutamate 252 is a Mg(2+) binding site.

The protein belongs to the class-II aminoacyl-tRNA synthetase family. Phe-tRNA synthetase alpha subunit type 1 subfamily. Tetramer of two alpha and two beta subunits. The cofactor is Mg(2+).

The protein localises to the cytoplasm. The catalysed reaction is tRNA(Phe) + L-phenylalanine + ATP = L-phenylalanyl-tRNA(Phe) + AMP + diphosphate + H(+). The polypeptide is Phenylalanine--tRNA ligase alpha subunit (Francisella tularensis subsp. holarctica (strain OSU18)).